We begin with the raw amino-acid sequence, 399 residues long: MIKVDKLPDVFIKAMPVLQTLEDAGFEAYFVGGSVRDLLLDRHVHDVDITTSAYPEEVKELFAKSIDTGIRHGTVTVLYGGESYEITTFRTESGYQDYRRPDHVTFVQNLDEDLKRRDFTINALAMDLHGQIVDLFNGVEDLKNHIIRAVGDPEKRFHEDALRMMRAVRFTSQLKFNLEEKTEQAIKDNHELLKKISVERIREEFVKMGIGPHSRQAFQIFLDTQLSEDVPDFAGKKELLQIYPQLQFSPTLETSLWSLIIILLKLPDEDISKFMRDWKNSNAMTEQVERIIKFFDLISDHTPNDYELFQAGERTIINTIDVAHILGQPVASEALVDRYLALPIKKPAELAIDGRFLIKHGMRPGAELGHTLNKIRELVVSSRLENSPDAIEKYLEDLD.

ATP is bound by residues glycine 33 and arginine 36. CTP is bound by residues glycine 33 and arginine 36. Residues aspartate 46 and aspartate 48 each coordinate Mg(2+). Residues arginine 117, aspartate 160, arginine 163, arginine 166, and arginine 169 each coordinate ATP. CTP-binding residues include arginine 117, aspartate 160, arginine 163, arginine 166, and arginine 169.

The protein belongs to the tRNA nucleotidyltransferase/poly(A) polymerase family. Bacterial CCA-adding enzyme type 3 subfamily. As to quaternary structure, homodimer. It depends on Mg(2+) as a cofactor.

The enzyme catalyses a tRNA precursor + 2 CTP + ATP = a tRNA with a 3' CCA end + 3 diphosphate. The catalysed reaction is a tRNA with a 3' CCA end + 2 CTP + ATP = a tRNA with a 3' CCACCA end + 3 diphosphate. Functionally, catalyzes the addition and repair of the essential 3'-terminal CCA sequence in tRNAs without using a nucleic acid template. Adds these three nucleotides in the order of C, C, and A to the tRNA nucleotide-73, using CTP and ATP as substrates and producing inorganic pyrophosphate. tRNA 3'-terminal CCA addition is required both for tRNA processing and repair. Also involved in tRNA surveillance by mediating tandem CCA addition to generate a CCACCA at the 3' terminus of unstable tRNAs. While stable tRNAs receive only 3'-terminal CCA, unstable tRNAs are marked with CCACCA and rapidly degraded. The sequence is that of CCA-adding enzyme from Lactobacillus helveticus (strain DPC 4571).